A 352-amino-acid polypeptide reads, in one-letter code: Uroporphyrinogen decarboxylase (352 aa).

Residues Arg-26–Arg-30, Asp-76, Tyr-153, Ser-208, and His-323 each bind substrate.

The protein belongs to the uroporphyrinogen decarboxylase family. Homodimer.

The protein resides in the cytoplasm. The catalysed reaction is uroporphyrinogen III + 4 H(+) = coproporphyrinogen III + 4 CO2. It functions in the pathway porphyrin-containing compound metabolism; protoporphyrin-IX biosynthesis; coproporphyrinogen-III from 5-aminolevulinate: step 4/4. In terms of biological role, catalyzes the decarboxylation of four acetate groups of uroporphyrinogen-III to yield coproporphyrinogen-III. The polypeptide is Uroporphyrinogen decarboxylase (Prochlorococcus marinus (strain NATL1A)).